The primary structure comprises 199 residues: Putative lectin L633 (199 aa).

A signal peptide spans 1–25 (MNILLLLMLLTSIILLVILIFLAYN). The span at 35 to 48 (CITPAPESQSISPD) shows a compositional bias: polar residues. A disordered region spans residues 35-74 (CITPAPESQSISPDQTTQLQTTTPVTSTPSNPTPTTIIPN). The segment covering 49–73 (QTTQLQTTTPVTSTPSNPTPTTIIP) has biased composition (low complexity). One can recognise a Bulb-type lectin domain in the interval 84–195 (EIVSNGDNVL…LGQELWCATR (112 aa)). Asn121 is a glycosylation site (N-linked (GlcNAc...) asparagine; by host).

It is found in the secreted. The protein is Putative lectin L633 of Acanthamoeba polyphaga (Amoeba).